The following is a 286-amino-acid chain: MAKLRPYYEESQSAYDISDDFFALFLDPTWVYTCAYFERDDMTLEEAQLAKVDLALDKLNLEPGMTLLDVGCGWGGALVRAVEKYDVNVIGLTLSRNHYERSKDRLAAIGTQRRAEARLQGWEEFEENVDRIVSFEAFDAFKKERYLTFFERSYDILPDDGRMLLHSLFTYDRRWLHEQGIALTMSDLRFLKFLRESIFPGGELPSEPDIVDNAQAAGFTIEHVQLLQQHYARTLDAWAANLQAARERAIAVQSEEVYNNFMHYLTGCAERFRRGLINVAQFTMTK.

S-adenosyl-L-methionine-binding positions include 32–33, 71–73, 93–98, and 122–123; these read YT, GCG, TLSRNH, and WE. Cys268 is a catalytic residue.

Belongs to the CFA/CMAS family.

Its pathway is lipid metabolism; mycolic acid biosynthesis. Functionally, involved in the conversion of a cis-olefin into a trans-olefin with concomitant introduction of an allylic methyl branch at the proximal position of the precursor to both the methoxy and ketomycolic acids. It directly affects the cis- to trans ratio and indirectly affects the keto to methoxy ratio. The polypeptide is Mycolic acid methyltransferase MmaA1 (cmaD) (Mycobacterium bovis (strain ATCC BAA-935 / AF2122/97)).